Reading from the N-terminus, the 503-residue chain is Aromatase (503 aa).

2 consecutive transmembrane segments (helical) span residues 19–39 (EVVPIASIAILLLTGFLLLVW) and 53–73 (FLGIGPLISHCRFLWMGIGSA). Substrate contacts are provided by Asp-309 and Met-374. Residue Cys-437 participates in heme binding.

It belongs to the cytochrome P450 family. Heme serves as cofactor.

The protein resides in the endoplasmic reticulum membrane. It is found in the microsome membrane. It carries out the reaction testosterone + 3 reduced [NADPH--hemoprotein reductase] + 3 O2 = 17beta-estradiol + formate + 3 oxidized [NADPH--hemoprotein reductase] + 4 H2O + 4 H(+). It catalyses the reaction androst-4-ene-3,17-dione + 3 reduced [NADPH--hemoprotein reductase] + 3 O2 = estrone + formate + 3 oxidized [NADPH--hemoprotein reductase] + 4 H2O + 4 H(+). The catalysed reaction is androst-4-ene-3,17-dione + reduced [NADPH--hemoprotein reductase] + O2 = 19-hydroxyandrost-4-ene-3,17-dione + oxidized [NADPH--hemoprotein reductase] + H2O + H(+). The enzyme catalyses 19-hydroxyandrost-4-ene-3,17-dione + reduced [NADPH--hemoprotein reductase] + O2 = 19-oxo-androst-4-ene-3,17-dione + oxidized [NADPH--hemoprotein reductase] + 2 H2O + H(+). It carries out the reaction 19-oxo-androst-4-ene-3,17-dione + reduced [NADPH--hemoprotein reductase] + O2 = estrone + formate + oxidized [NADPH--hemoprotein reductase] + H2O + 2 H(+). It catalyses the reaction estrone + reduced [NADPH--hemoprotein reductase] + O2 = 2-hydroxyestrone + oxidized [NADPH--hemoprotein reductase] + H2O + H(+). The catalysed reaction is 17beta-hydroxy-5alpha-androstan-3-one + reduced [NADPH--hemoprotein reductase] + O2 = 17beta,19-dihydroxy-3-oxo-5alpha-androstanone + oxidized [NADPH--hemoprotein reductase] + H2O + H(+). The enzyme catalyses 17beta,19-dihydroxy-3-oxo-5alpha-androstanone + reduced [NADPH--hemoprotein reductase] + O2 = 17beta-hydroxy-3,19-dioxo-5alpha-androstanone + oxidized [NADPH--hemoprotein reductase] + 2 H2O + H(+). It carries out the reaction 17beta-hydroxy-3,19-dioxo-5alpha-androstanone + reduced [NADPH--hemoprotein reductase] + O2 = 17beta-hydroxy-3-oxo-19-nor-5alpha-androst-1-ene + formate + oxidized [NADPH--hemoprotein reductase] + H2O + 2 H(+). Its pathway is steroid hormone biosynthesis. In terms of biological role, a cytochrome P450 monooxygenase that catalyzes the conversion of C19 androgens, androst-4-ene-3,17-dione (androstenedione) and testosterone to the C18 estrogens, estrone and estradiol, respectively. Catalyzes three successive oxidations of C19 androgens: two conventional oxidations at C19 yielding 19-hydroxy and 19-oxo/19-aldehyde derivatives, followed by a third oxidative aromatization step that involves C1-beta hydrogen abstraction combined with cleavage of the C10-C19 bond to yield a phenolic A ring and formic acid. Alternatively, the third oxidative reaction yields a 19-norsteroid and formic acid. Converts dihydrotestosterone to delta1,10-dehydro 19-nordihydrotestosterone and may play a role in homeostasis of this potent androgen. Also displays 2-hydroxylase activity toward estrone. Mechanistically, uses molecular oxygen inserting one oxygen atom into a substrate, and reducing the second into a water molecule, with two electrons provided by NADPH via cytochrome P450 reductase (CPR; NADPH-ferrihemoprotein reductase). The polypeptide is Aromatase (CYP19A1) (Bos taurus (Bovine)).